Consider the following 157-residue polypeptide: Endoribonuclease YbeY (157 aa).

Zn(2+) contacts are provided by histidine 118, histidine 122, and histidine 128.

This sequence belongs to the endoribonuclease YbeY family. Requires Zn(2+) as cofactor.

It localises to the cytoplasm. In terms of biological role, single strand-specific metallo-endoribonuclease involved in late-stage 70S ribosome quality control and in maturation of the 3' terminus of the 16S rRNA. This Bordetella bronchiseptica (strain ATCC BAA-588 / NCTC 13252 / RB50) (Alcaligenes bronchisepticus) protein is Endoribonuclease YbeY.